The following is a 134-amino-acid chain: RxLR effector protein Avh238 (134 aa).

A signal peptide spans 1–21 (MRGVFFVAVAVAIFARSSAEA). A RxLR-dEER motif is present at residues 44–68 (RFLRVADPEDDDLAAPADDGKTEER). Residues 49–70 (ADPEDDDLAAPADDGKTEERAP) are disordered. Over residues 61-70 (DDGKTEERAP) the composition is skewed to basic and acidic residues.

Belongs to the RxLR effector family. As to quaternary structure, interacts with host 1-aminocyclopropane-1-carboxylate synthases ACS1, ACS2, ACS3, ACS10 and ACS12.

The protein localises to the secreted. It localises to the host cytoplasm. The protein resides in the host nucleus. Effector that suppresses plant defense responses during the early stages of pathogen infection. Suppresses cell death induced by effectors and PAMPs in plant hosts. Is able to induced cell death in tomato, tobacco, eggplant, and potato, but not in A.thaliana. Interacts with and destabilizes host 1-aminocyclopropane-1-carboxylate synthases. By suppressing type2 ACS-catalyzed ethylene biosynthesis, Avh238 facilitates Phytophthora infection. The protein is RxLR effector protein Avh238 (Avh238) of Phytophthora sojae (strain P6497) (Soybean stem and root rot agent).